The chain runs to 681 residues: Cell cycle checkpoint protein RAD17 (681 aa).

Positions 17–25 (DWVDPSFDD) match the RAD1-binding motif motif. Residues 42–61 (VNNSSHRRKNGPSTLESSRF) are disordered. Position 55 is a phosphothreonine (Thr-55). Ser-71 and Ser-86 each carry phosphoserine. 137 to 144 (GPPGCGKT) contacts ATP. Disordered regions lie at residues 344-377 (SSKG…KPDR) and 606-681 (HGMI…SDGT). Ser-359 is modified (phosphoserine). Positions 432-681 (LVEPEEVVEM…IIEDYESDGT (250 aa)) are interaction with MCM7. Positions 631 to 662 (EPTQATVPETWSLPLSQNSASELPASQPQPFS) are enriched in polar residues. A Phosphothreonine; by ATM modification is found at Thr-633. A phosphoserine; by ATR and ATM mark is found at Ser-646 and Ser-656. Positions 666–681 (DMEENIIIEDYESDGT) are enriched in acidic residues.

It belongs to the rad17/RAD24 family. In terms of assembly, part of a DNA-binding complex containing RFC2, RFC3, RFC4 and RFC5. Interacts with RAD1 and RAD9 within the 9-1-1 (RAD1-RAD9-HUS1) complex. Interacts with RAD9B, POLE, SNU13 and MCM7. DNA damage promotes interaction with ATR or ATM and disrupts interaction with the 9-1-1 (RAD1-RAD9-HUS1) complex. Interacts (when phosphorylated) with NBN; promoting recruitment of the MRN complex to DNA damage sites. Phosphorylation on Ser-646 and Ser-656 is cell cycle-regulated, enhanced by genotoxic stress, and required for activation of checkpoint signaling. Phosphorylation is mediated by ATR upon UV or replication arrest, whereas it may be mediated both by ATR and ATM upon ionizing radiation. Phosphorylation on both sites is required for interaction with RAD1 but dispensable for interaction with RFC3 or RFC4. Phosphorylation at Thr-633 by ATM in response to DNA damage promotes interaction with NBN and recruitment of the MRN complex to DNA damage sites. Overexpressed in various cancer cell lines and in colon carcinoma (at protein level). Isoform 2 and isoform 3 are the most abundant isoforms in non irradiated cells (at protein level). Ubiquitous at low levels. Highly expressed in testis, where it is expressed within the germinal epithelium of the seminiferous tubuli. Weakly expressed in seminomas (testicular tumors).

It is found in the nucleus. The protein resides in the chromosome. Its function is as follows. Essential for sustained cell growth, maintenance of chromosomal stability, and ATR-dependent checkpoint activation upon DNA damage. Has a weak ATPase activity required for binding to chromatin. Participates in the recruitment of the 9-1-1 (RAD1-RAD9-HUS1) complex and RHNO1 onto chromatin, and in CHEK1 activation. Involved in homologous recombination by mediating recruitment of the MRN complex to DNA damage sites. May also serve as a sensor of DNA replication progression. The polypeptide is Cell cycle checkpoint protein RAD17 (Homo sapiens (Human)).